Consider the following 1486-residue polypeptide: Chromosome partition protein MukB (1486 aa).

Residue 34 to 41 (GGNGAGKS) coordinates ATP. Coiled-coil stretches lie at residues 326 to 418 (LEAD…QYNQ), 444 to 480 (LETF…QAYQ), and 509 to 603 (RHLA…RAPV). Residues 666 to 783 (PGGSEDQRLN…EVPLFGRAAR (118 aa)) form a flexible hinge region. 3 coiled-coil regions span residues 835-923 (EAEI…AKLE), 977-1115 (EMLS…TAKA), and 1209-1266 (VEAI…QNVS).

This sequence belongs to the SMC family. MukB subfamily. In terms of assembly, homodimerization via its hinge domain. Binds to DNA via its C-terminal region. Interacts, and probably forms a ternary complex, with MukE and MukF via its C-terminal region. The complex formation is stimulated by calcium or magnesium. Interacts with tubulin-related protein FtsZ.

Its subcellular location is the cytoplasm. It localises to the nucleoid. Plays a central role in chromosome condensation, segregation and cell cycle progression. Functions as a homodimer, which is essential for chromosome partition. Involved in negative DNA supercoiling in vivo, and by this means organize and compact chromosomes. May achieve or facilitate chromosome segregation by condensation DNA from both sides of a centrally located replisome during cell division. In Escherichia coli O6:K15:H31 (strain 536 / UPEC), this protein is Chromosome partition protein MukB.